We begin with the raw amino-acid sequence, 959 residues long: UPF0182 protein MAE_41360 (959 aa).

9 helical membrane-spanning segments follow: residues 13 to 33, 50 to 70, 99 to 119, 156 to 176, 184 to 204, 239 to 259, 276 to 296, 319 to 339, and 362 to 382; these read PILL…VVAN, LSWQ…FIFT, LLGL…MLLY, DISS…GLLI, IISI…WANF, LWLT…YLFS, LRHL…HHII, VGQF…IWLG, and FFPY…GTII.

This sequence belongs to the UPF0182 family.

The protein localises to the cell membrane. The chain is UPF0182 protein MAE_41360 from Microcystis aeruginosa (strain NIES-843 / IAM M-2473).